Consider the following 339-residue polypeptide: Heat stress transcription factor C-1a (339 aa).

Residues 154 to 217 (EEEDAAEDVL…LAKLADDPNA (64 aa)) are a coiled coil. The tract at residues 176-212 (LRHEQTAIGEELARMSQRLQATERRPDQLMSFLAKLA) is hydrophobic repeat HR-A/B. A disordered region spans residues 227–248 (AERKRRRQHLPSHEPTVCPLPP). Residues 229–233 (RKRRR) carry the Nuclear localization signal motif.

It belongs to the HSF family. Class C subfamily. As to quaternary structure, homotrimer. Exhibits temperature-dependent phosphorylation.

It is found in the nucleus. Transcriptional regulator that specifically binds DNA of heat shock promoter elements (HSE). In Oryza sativa subsp. japonica (Rice), this protein is Heat stress transcription factor C-1a (HSFC1A).